A 203-amino-acid chain; its full sequence is Protein GrpE (203 aa).

Basic and acidic residues predominate over residues 1–10; sequence MSNESIKAEQ. The interval 1–20 is disordered; it reads MSNESIKAEQDLIQEGVESE.

This sequence belongs to the GrpE family. In terms of assembly, homodimer.

Its subcellular location is the cytoplasm. Its function is as follows. Participates actively in the response to hyperosmotic and heat shock by preventing the aggregation of stress-denatured proteins, in association with DnaK and GrpE. It is the nucleotide exchange factor for DnaK and may function as a thermosensor. Unfolded proteins bind initially to DnaJ; upon interaction with the DnaJ-bound protein, DnaK hydrolyzes its bound ATP, resulting in the formation of a stable complex. GrpE releases ADP from DnaK; ATP binding to DnaK triggers the release of the substrate protein, thus completing the reaction cycle. Several rounds of ATP-dependent interactions between DnaJ, DnaK and GrpE are required for fully efficient folding. This chain is Protein GrpE, found in Shewanella sp. (strain MR-4).